We begin with the raw amino-acid sequence, 144 residues long: MGRVRTKTVKKSSRQVIERYYSKMTLDFHTNKKILEEVAIIPSKRLRNKIAGFSTHLMKRIQKGPVRGISLKLQEEERERRMDFVPDESAIKTDLIEVDKETLDMLSALGMSDLPGVVKQAAEPQAVAALPSYGRGGGGFGRKY.

The protein belongs to the eukaryotic ribosomal protein eS17 family.

This chain is Small ribosomal subunit protein eS17 (RPS17), found in Solanum lycopersicum (Tomato).